Consider the following 235-residue polypeptide: MSYGREDTTIEPDFIEPDAPLAASGGVADNIGGTMQNSGSRGTLDETVLQTLKRDVVEINSRLKQVVYPHFPSFFSPSDDGIGAADNDISANCDLWAPLAFIILYSLFVSHARSLFSSLFVSSWFILLVMALHLRLTKPHQRVSLISYISISGYCLFPQVLNALVSQILLPLAYHIGKQNRWIVRVLSLVKLVVMALCLMWSVAAVSWVTKSKTIIEIYPLALCLFGMAWLSTIL.

5 consecutive transmembrane segments (helical) span residues 89-109 (ISAN…SLFV), 114-134 (SLFS…ALHL), 145-165 (LISY…NALV), 186-206 (VLSL…VAAV), and 215-235 (IIEI…STIL).

This sequence belongs to the YIP1 family. As to quaternary structure, interacts with TVP18, TVP23, YIP1 and YIP5. Interacts with SEC4, YPT1, YPT6, YPT7, YPT10, YPT11, YPT31, YPT32 and YPT52; These proteins are all Rab GTPases.

It is found in the golgi apparatus membrane. Functionally, may be involved in proper membrane localization of Rab GTPases. This chain is Protein YIP4 (YIP4), found in Saccharomyces cerevisiae (strain ATCC 204508 / S288c) (Baker's yeast).